Consider the following 522-residue polypeptide: Putative glucosylceramidase 3 (522 aa).

The N-terminal stretch at 1 to 21 (MSRWKVVILCLLSFMFEIGHA) is a signal peptide. Catalysis depends on Glu259, which acts as the Proton donor. The Nucleophile role is filled by Glu364.

It belongs to the glycosyl hydrolase 30 family.

The catalysed reaction is a beta-D-glucosylceramide + H2O = an N-acyl-sphingoid base + D-glucose. The enzyme catalyses a beta-D-glucosyl-(1&lt;-&gt;1')-N-acylsphing-4-enine + H2O = an N-acylsphing-4-enine + D-glucose. It catalyses the reaction an N-acyl-1-beta-D-glucosyl-15-methylhexadecasphing-4-enine + H2O = an N-acyl-15-methylhexadecasphing-4-enine + D-glucose. The protein operates within lipid metabolism; sphingolipid metabolism. Glucosylceramidase that catalyzes the hydrolysis of glucosylceramides into free ceramides and glucose. C.elegans contain specific sphingoid bases, which are unique or different in structure compared to the sphingoid bases found in other animals. Two examples of these distinctive compounds are: 15-methylhexadecasphinganine and 15-methylhexadecasphing-4-enine. In Caenorhabditis elegans, this protein is Putative glucosylceramidase 3.